The primary structure comprises 183 residues: Fetal and adult testis-expressed transcript protein (183 aa).

Residues 42 to 66 (SRSRGASQKKQKLEQKAAGSASAKR) form a disordered region. Residues 163 to 181 (TLIIAVLVSASIANLWLWM) traverse the membrane as a helical segment.

In terms of assembly, interacts with BIK and RNF183. Interacts with IMMT/MIC60and EMD. Testis-specific in fetus (aged from 6 to 11 weeks). In adult, expressed predominantly in testis, with some expression in lung, heart, kidney, adrenal gland and whole brain. Highly expressed in certain types of cancer tissues such as hepatocellular carcinoma, colon and gastric cancer. Weakly expressed in normal pancreas.

The protein resides in the mitochondrion. It is found in the mitochondrion outer membrane. It localises to the endoplasmic reticulum membrane. In terms of biological role, involved in the regulation of endoplasmic reticulum (ER)-mitochondria coupling. Negatively regulates the ER-mitochondria distance and Ca(2+) transfer from ER to mitochondria possibly implicating it in the regulation of apoptosis. May collaborate with RNF183 to restrain BIK protein levels thus regulating apoptotic signaling. The polypeptide is Fetal and adult testis-expressed transcript protein (FATE1) (Homo sapiens (Human)).